The primary structure comprises 44 residues: Relaxin (44 aa).

Residue Gln1 is modified to Pyrrolidone carboxylic acid. 3 disulfides stabilise this stretch: Cys3–Cys31, Cys15–Cys44, and Cys30–Cys35.

The protein belongs to the insulin family. In terms of assembly, heterodimer of a B chain and an A chain linked by two disulfide bonds.

The protein resides in the secreted. The protein is Relaxin of Carcharias taurus (Sand tiger shark).